The chain runs to 182 residues: Putative pre-16S rRNA nuclease (182 aa).

The protein belongs to the YqgF nuclease family.

It is found in the cytoplasm. Functionally, could be a nuclease involved in processing of the 5'-end of pre-16S rRNA. In Corynebacterium glutamicum (strain ATCC 13032 / DSM 20300 / JCM 1318 / BCRC 11384 / CCUG 27702 / LMG 3730 / NBRC 12168 / NCIMB 10025 / NRRL B-2784 / 534), this protein is Putative pre-16S rRNA nuclease.